Here is a 116-residue protein sequence, read N- to C-terminus: Large ribosomal subunit protein bL20c (116 aa).

The protein belongs to the bacterial ribosomal protein bL20 family.

It is found in the plastid. The protein localises to the chloroplast. In terms of biological role, binds directly to 23S ribosomal RNA and is necessary for the in vitro assembly process of the 50S ribosomal subunit. It is not involved in the protein synthesizing functions of that subunit. The sequence is that of Large ribosomal subunit protein bL20c from Cyanidioschyzon merolae (strain NIES-3377 / 10D) (Unicellular red alga).